Here is an 899-residue protein sequence, read N- to C-terminus: Ewing's tumor-associated antigen 1 homolog (899 aa).

The segment at 1–82 (MSRRRKHGDS…TEERYETPKR (82 aa)) is disordered. Positions 71–81 (SNTEERYETPK) are enriched in basic and acidic residues. Residues 105-111 (IFWDQNS) carry the ATR-activation domain (AAD) motif. Residues 180–210 (TKLKSQNQEEELMKLAKQFDKNMEELDVIQE) are a coiled coil. Glycyl lysine isopeptide (Lys-Gly) (interchain with G-Cter in SUMO2) cross-links involve residues lysine 416 and lysine 444. Serine 467 is modified (phosphoserine). Glycyl lysine isopeptide (Lys-Gly) (interchain with G-Cter in SUMO2) cross-links involve residues lysine 485 and lysine 539. Positions 607 to 622 (DDVDDDILYQACDDIE) match the RBM1 motif motif. Residue serine 810 is modified to Phosphoserine. Residues 833–899 (NKTVNPLPGK…AQASSVKKGR (67 aa)) are disordered. Residues 859–877 (PSKEEEEKNRKCSPEEIQR) are compositionally biased toward basic and acidic residues. Residues 868 to 890 (RKCSPEEIQRKRQAALIRRMAKA) carry the RBM2 motif motif.

In terms of assembly, interacts (via RBM1 motif) with RPA1. Interacts (via RBM2 motif) with RPA2. Interacts (via the ATR-activation domain motif) with ATR. In terms of processing, phosphorylated by ATR.

It is found in the nucleus. In terms of biological role, replication stress response protein that accumulates at DNA damage sites and promotes replication fork progression and integrity. Recruited to stalled replication forks via interaction with the RPA complex and directly stimulates ATR kinase activity independently of TOPBP1. Probably only regulates a subset of ATR targets. In Bos taurus (Bovine), this protein is Ewing's tumor-associated antigen 1 homolog.